We begin with the raw amino-acid sequence, 291 residues long: 33 kDa chaperonin (291 aa).

2 disulfide bridges follow: Cys235–Cys237 and Cys268–Cys271.

It belongs to the HSP33 family. In terms of processing, under oxidizing conditions two disulfide bonds are formed involving the reactive cysteines. Under reducing conditions zinc is bound to the reactive cysteines and the protein is inactive.

It is found in the cytoplasm. Redox regulated molecular chaperone. Protects both thermally unfolding and oxidatively damaged proteins from irreversible aggregation. Plays an important role in the bacterial defense system toward oxidative stress. This is 33 kDa chaperonin from Bacillus velezensis (strain DSM 23117 / BGSC 10A6 / LMG 26770 / FZB42) (Bacillus amyloliquefaciens subsp. plantarum).